Consider the following 114-residue polypeptide: Ribonuclease P protein component (114 aa).

The protein belongs to the RnpA family. As to quaternary structure, consists of a catalytic RNA component (M1 or rnpB) and a protein subunit.

It catalyses the reaction Endonucleolytic cleavage of RNA, removing 5'-extranucleotides from tRNA precursor.. Functionally, RNaseP catalyzes the removal of the 5'-leader sequence from pre-tRNA to produce the mature 5'-terminus. It can also cleave other RNA substrates such as 4.5S RNA. The protein component plays an auxiliary but essential role in vivo by binding to the 5'-leader sequence and broadening the substrate specificity of the ribozyme. In Borrelia duttonii (strain Ly), this protein is Ribonuclease P protein component.